Here is a 208-residue protein sequence, read N- to C-terminus: Small ribosomal subunit protein uS4 (208 aa).

The interval 32–53 (LNRKRGKNSPGQHGASKVKMSD) is disordered. The S4 RNA-binding domain maps to 99 to 161 (LRLDNVVYRL…YKSNVIIKKL (63 aa)).

The protein belongs to the universal ribosomal protein uS4 family. Part of the 30S ribosomal subunit. Contacts protein S5. The interaction surface between S4 and S5 is involved in control of translational fidelity.

Its function is as follows. One of the primary rRNA binding proteins, it binds directly to 16S rRNA where it nucleates assembly of the body of the 30S subunit. In terms of biological role, with S5 and S12 plays an important role in translational accuracy. The polypeptide is Small ribosomal subunit protein uS4 (Endomicrobium trichonymphae).